Here is a 256-residue protein sequence, read N- to C-terminus: Transcription factor CAULIFLOWER (256 aa).

The region spanning M1–S61 is the MADS-box domain. The region spanning Q90–I180 is the K-box domain.

Homodimer capable of binding to CArG-box sequences.

It is found in the nucleus. In terms of biological role, probable transcription factor that promotes early floral meristem identity in synergy with APETALA1, FRUITFULL and LEAFY. Is required subsequently for the transition of an inflorescence meristem into a floral meristem. Seems to be partially redundant to the function of APETALA1. The chain is Transcription factor CAULIFLOWER (CAL) from Arabidopsis lyrata subsp. lyrata (Lyre-leaved rock-cress).